A 310-amino-acid polypeptide reads, in one-letter code: 26S proteasome non-ATPase regulatory subunit 7 homolog B (310 aa).

N-acetylmethionine is present on M1. The region spanning 17–154 (VIVHPLVLLS…YYAVEEVKEN (138 aa)) is the MPN domain.

Belongs to the peptidase M67A family. As to quaternary structure, component of the 19S regulatory particle (RP/PA700) lid subcomplex of the 26S proteasome. The 26S proteasome is composed of a core protease (CP), known as the 20S proteasome, capped at one or both ends by the 19S regulatory particle (RP/PA700). The RP/PA700 complex is composed of at least 17 different subunits in two subcomplexes, the base and the lid, which form the portions proximal and distal to the 20S proteolytic core, respectively.

Functionally, acts as a regulatory subunit of the 26S proteasome which is involved in the ATP-dependent degradation of ubiquitinated proteins. The polypeptide is 26S proteasome non-ATPase regulatory subunit 7 homolog B (RPN8B) (Arabidopsis thaliana (Mouse-ear cress)).